A 265-amino-acid chain; its full sequence is Isoprenyl transferase (265 aa).

Aspartate 35 is an active-site residue. Aspartate 35 serves as a coordination point for Mg(2+). Substrate-binding positions include 36-39, tryptophan 40, arginine 48, histidine 52, and 80-82; these read GNGR and SIE. Asparagine 83 acts as the Proton acceptor in catalysis. Substrate-binding positions include tryptophan 84, arginine 86, arginine 203, and 209 to 211; that span reads RIS. Glutamate 222 serves as a coordination point for Mg(2+).

Belongs to the UPP synthase family. In terms of assembly, homodimer. The cofactor is Mg(2+).

Functionally, catalyzes the condensation of isopentenyl diphosphate (IPP) with allylic pyrophosphates generating different type of terpenoids. The protein is Isoprenyl transferase of Chlorobaculum tepidum (strain ATCC 49652 / DSM 12025 / NBRC 103806 / TLS) (Chlorobium tepidum).